A 119-amino-acid chain; its full sequence is Large ribosomal subunit protein uL18 (119 aa).

It belongs to the universal ribosomal protein uL18 family. As to quaternary structure, part of the 50S ribosomal subunit; part of the 5S rRNA/L5/L18/L25 subcomplex. Contacts the 5S and 23S rRNAs.

This is one of the proteins that bind and probably mediate the attachment of the 5S RNA into the large ribosomal subunit, where it forms part of the central protuberance. This chain is Large ribosomal subunit protein uL18, found in Clostridium tetani (strain Massachusetts / E88).